Consider the following 509-residue polypeptide: Erythropoietin receptor (509 aa).

The first 24 residues, 1 to 24 (MYHFGATLWPGVGSLCLLLAGATW), serve as a signal peptide directing secretion. At 25–251 (APSPNSPDAK…SLLTASDLDP (227 aa)) the chain is on the extracellular side. Disulfide bonds link C52–C62 and C91–C107. The Fibronectin type-III domain maps to 148–248 (PPAGLLARRA…EPASLLTASD (101 aa)). A glycan (N-linked (GlcNAc...) asparagine) is linked at N184. The short motif at 234 to 238 (WSAWS) is the WSXWS motif element. A helical membrane pass occupies residues 252-274 (LILTLSLILVLILLLLAVLALLS). Topologically, residues 275 to 509 (HRRTLKQKIW…PSPPNYVTCS (235 aa)) are cytoplasmic. Residue K282 forms a Glycyl lysine isopeptide (Lys-Gly) (interchain with G-Cter in ubiquitin) linkage. The short motif at 283–291 (IWPGIPSPE) is the Box 1 motif element. Phosphotyrosine; by JAK2 is present on residues Y369 and Y427. The ITIM motif motif lies at 453 to 458 (LKYLYL). K454 is covalently cross-linked (Glycyl lysine isopeptide (Lys-Gly) (interchain with G-Cter in ubiquitin)). Phosphotyrosine; by JAK2 is present on residues Y455, Y457, Y469, Y486, Y490, and Y505. The interval 467–509 (TDYSSGGSQETQGGSSSGPYSNPYENSLVPAPEPSPPNYVTCS) is disordered. Positions 470–493 (SSGGSQETQGGSSSGPYSNPYENS) are enriched in low complexity.

It belongs to the type I cytokine receptor family. Type 1 subfamily. As to quaternary structure, forms homodimers on EPO stimulation. The tyrosine-phosphorylated form interacts with several SH2 domain-containing proteins including LYN, the adapter protein SH2B2, PTPN6, PTPN11, JAK2, PI3 kinases, STAT5A/B, SOCS3, CRKL. Interacts with INPP5D/SHIP1. SH2B2 binding inhibits the JAK-STAT signaling. Interacts with RHEX; this interaction occurs in a erythropoietin (EPO)-dependent manner. Interacts with ATXN2L. Post-translationally, on EPO stimulation, phosphorylated on C-terminal tyrosine residues by JAK2. The phosphotyrosine motifs are also recruitment sites for several SH2-containing proteins and adapter proteins which mediate cell proliferation. Phosphorylation on Tyr-455 is required for PTPN6 interaction, Tyr-427 for PTPN11. Tyr-427 is also required for SOCS3 binding, but Tyr-455/Tyr-457 motif is the preferred binding site. In terms of processing, ubiquitinated by the ECS(SOCS2) complex following ligand-binding and phosphorylation by JAK2, leading to its degradation by the proteasome. Regulation by the ECS(SOCS2) complex acts as a negative feedback loop of erythropoietin-mediated signaling pathway. Ubiquitination at Lys-282 mediates receptor internalization, whereas ubiquitination at Lys-454 promotes trafficking of activated receptors to the lysosomes for degradation. Ubiquitinated by NOSIP; appears to be either multi-monoubiquitinated or polyubiquitinated. Ubiquitination mediates proliferation and survival of EPO-dependent cells.

The protein localises to the cell membrane. Its function is as follows. Receptor for erythropoietin, which mediates erythropoietin-induced erythroblast proliferation and differentiation. Upon EPO stimulation, EPOR dimerizes triggering the JAK2/STAT5 signaling cascade. In some cell types, can also activate STAT1 and STAT3. May also activate the LYN tyrosine kinase. Isoform EPOR-T acts as a dominant-negative receptor of EPOR-mediated signaling. This is Erythropoietin receptor (EPOR) from Sus scrofa (Pig).